The following is a 473-amino-acid chain: Maltose fermentation regulatory protein MAL63 (473 aa).

The zn(2)-C6 fungal-type DNA-binding region spans 8–34 (CDCCRVRRVKCDRNKPCNRCIQRNLNC). The Nuclear localization signal signature appears at 41–49 (KKRGPKSIR).

This sequence belongs to the MAL13 family.

Its subcellular location is the nucleus. Regulates the coordinate transcription of structural MAL6S (maltase) and MAL6T (maltose permease) genes. The sequence is that of Maltose fermentation regulatory protein MAL63 (MAL63) from Saccharomyces cerevisiae (Baker's yeast).